A 735-amino-acid chain; its full sequence is Zinc finger CCCH domain-containing protein 14 (735 aa).

An N-acetylmethionine modification is found at Met1. Polar residues-rich tracts occupy residues 79-103 (DPASLKSSDTNLFDGNVPSNKSSFS) and 131-141 (VSTSSQEQKAT). The segment at 79–141 (DPASLKSSDT…STSSQEQKAT (63 aa)) is disordered. Position 85 is a phosphoserine (Ser85). Residues Lys99, Lys139, Lys175, and Lys198 each participate in a glycyl lysine isopeptide (Lys-Gly) (interchain with G-Cter in SUMO2) cross-link. Ser240 carries the post-translational modification Phosphoserine. Glycyl lysine isopeptide (Lys-Gly) (interchain with G-Cter in SUMO2) cross-links involve residues Lys245, Lys283, and Lys295. A disordered region spans residues 307-351 (KFSHDGEEEEEDDDCGSRTGSISSSVSVPAKPERRPSLPPSKQAN). Ser309, Ser327, and Ser343 each carry phosphoserine. Position 357 is an N6-acetyllysine; alternate (Lys357). Lys357 participates in a covalent cross-link: Glycyl lysine isopeptide (Lys-Gly) (interchain with G-Cter in SUMO2); alternate. Residues 366-380 (VTKTTNYSTVSQKQT) are compositionally biased toward polar residues. Residues 366–388 (VTKTTNYSTVSQKQTLPVAPRTR) form a disordered region. Lys378 is covalently cross-linked (Glycyl lysine isopeptide (Lys-Gly) (interchain with G-Cter in SUMO2)). A phosphoserine mark is found at Ser390 and Ser409. Residues 400–430 (QGHGRVPRISSPVKEEEAQGGSVDERQGTQQ) form a disordered region. The segment covering 412-426 (VKEEEAQGGSVDERQ) has biased composition (basic and acidic residues). Lys413 is covalently cross-linked (Glycyl lysine isopeptide (Lys-Gly) (interchain with G-Cter in SUMO2)). A phosphoserine mark is found at Ser421, Ser498, Ser515, Ser527, and Ser620. C3H1-type zinc fingers lie at residues 595–620 (EKLLERCKYWPACKNGDECAYHHPVS), 621–640 (PCKAFPNCKFAEKCLFVHPN), 641–656 (CKYDAKCTKPDCPFTH), 681–698 (CRYFPACKKMECPFYHPK), and 700–718 (CRFNTQCTRPDCAFYHPTI).

Belongs to the ZC3H14 family. Homodimer; facilitating circular RNAs (circRNAs) formation. Associates with the spliceosome. Interacts with HOOK2. Interacts with ZFC3H1 in a RNase-sensitive manner.

The protein resides in the nucleus speckle. Functionally, RNA-binding protein involved in the biogenesis of circular RNAs (circRNAs), which are produced by back-splicing circularization of pre-mRNAs. Acts by binding to both exon-intron boundary and 3'-UTR of pre-mRNAs to promote circRNA biogenesis through dimerization and the association with the spliceosome. Required for spermatogenesis via involvement in circRNA biogenesis. Regulates the pre-mRNA processing of ATP5MC1; preventing its degradation. Also binds the poly(A) tail of mRNAs; controlling poly(A) length in neuronal cells. The chain is Zinc finger CCCH domain-containing protein 14 (ZC3H14) from Bos taurus (Bovine).